A 352-amino-acid polypeptide reads, in one-letter code: UDP-N-acetylglucosamine--N-acetylmuramyl-(pentapeptide) pyrophosphoryl-undecaprenol N-acetylglucosamine transferase (352 aa).

UDP-N-acetyl-alpha-D-glucosamine-binding residues include S195 and Q287.

This sequence belongs to the glycosyltransferase 28 family. MurG subfamily.

The protein resides in the cell membrane. The enzyme catalyses Mur2Ac(oyl-L-Ala-gamma-D-Glu-L-Lys-D-Ala-D-Ala)-di-trans,octa-cis-undecaprenyl diphosphate + UDP-N-acetyl-alpha-D-glucosamine = beta-D-GlcNAc-(1-&gt;4)-Mur2Ac(oyl-L-Ala-gamma-D-Glu-L-Lys-D-Ala-D-Ala)-di-trans,octa-cis-undecaprenyl diphosphate + UDP + H(+). Its pathway is cell wall biogenesis; peptidoglycan biosynthesis. In terms of biological role, cell wall formation. Catalyzes the transfer of a GlcNAc subunit on undecaprenyl-pyrophosphoryl-MurNAc-pentapeptide (lipid intermediate I) to form undecaprenyl-pyrophosphoryl-MurNAc-(pentapeptide)GlcNAc (lipid intermediate II). The protein is UDP-N-acetylglucosamine--N-acetylmuramyl-(pentapeptide) pyrophosphoryl-undecaprenol N-acetylglucosamine transferase of Streptococcus pneumoniae serotype 19F (strain G54).